The primary structure comprises 408 residues: Lupus La protein (408 aa).

Residues 7–99 (NEKMAALEAK…RRSPSKPLPE (93 aa)) form the HTH La-type RNA-binding domain. Phosphoserine occurs at positions 92 and 94. One can recognise an RRM domain in the interval 111–187 (RSVYIKGFPT…TDLLILFKDD (77 aa)). K116 carries the post-translational modification N6-acetyllysine. T120 carries the phosphothreonine modification. K128 carries the N6-acetyllysine modification. S225 is subject to Phosphoserine. The xRRM domain maps to 227–348 (EEKIGCLLKF…KGKGNKAAQP (122 aa)). K328, K341, and K360 each carry N6-acetyllysine. Basic residues predominate over residues 329–342 (WKSKGRRFKGKGKG). Residues 329 to 408 (WKSKGRRFKG…QKTENGAGDQ (80 aa)) form a disordered region. The residue at position 362 (T362) is a Phosphothreonine. Residue S366 is modified to Phosphoserine; by CK2. A compositionally biased stretch (basic and acidic residues) spans 384-395 (RAREETDKEEPA).

Interacts with DDX15. May interact with RUFY1. Phosphorylated. The phosphorylation sites are at the C-terminal part of the protein. Post-translationally, the N-terminus is blocked.

It is found in the nucleus. Binds to the 3' poly(U) terminus of nascent RNA polymerase III transcripts, protecting them from exonuclease digestion and facilitating their folding and maturation. In case of Coxsackievirus B3 infection, binds to the viral internal ribosome entry site (IRES) and stimulates the IRES-mediated translation. In Homo sapiens (Human), this protein is Lupus La protein (SSB).